The following is a 327-amino-acid chain: GMP reductase (327 aa).

C175 acts as the Thioimidate intermediate in catalysis. An NADP(+)-binding site is contributed by 204-227 (IIADGGIRTPGDIAKSIRFGATMV).

It belongs to the IMPDH/GMPR family. GuaC type 2 subfamily.

It catalyses the reaction IMP + NH4(+) + NADP(+) = GMP + NADPH + 2 H(+). Its function is as follows. Catalyzes the irreversible NADPH-dependent deamination of GMP to IMP. It functions in the conversion of nucleobase, nucleoside and nucleotide derivatives of G to A nucleotides, and in maintaining the intracellular balance of A and G nucleotides. This is GMP reductase from Clostridium acetobutylicum (strain ATCC 824 / DSM 792 / JCM 1419 / IAM 19013 / LMG 5710 / NBRC 13948 / NRRL B-527 / VKM B-1787 / 2291 / W).